We begin with the raw amino-acid sequence, 159 residues long: Cystatin-9 (159 aa).

A signal peptide spans 1-28; sequence MSSPQRRKAMPWALSLLLMGFQLLVTYA.

This sequence belongs to the cystatin family. As to expression, expressed in heart, placenta, lung, liver, skeletal muscle and pancreas. Not expressed in brain. Expressed in epididymis, kidney, testis, spinal cord, and thymus with a strong expression in epididymis and kidney and a weak expression in the spinal cord and thymus.

Its subcellular location is the secreted. In terms of biological role, may be involved in testis development. May play a role in hematopoietic differentiation or inflammation. Has immunomodulatory and antimicrobial functions against Francisella tularensis, a Gram-negative bacteria. The sequence is that of Cystatin-9 (CST9) from Homo sapiens (Human).